A 228-amino-acid chain; its full sequence is Protein boule (228 aa).

Residues 33–110 form the RRM domain; the sequence is NRIFVGGISG…RKLNIAPAIK (78 aa). One can recognise a DAZ domain in the interval 151–178; the sequence is PAAGVPAIYPPSAMQYQPFYQYYSVPMN. Low complexity predominate over residues 193 to 214; the sequence is PLLHSPTSNPHSPHSQSHPQSP. Residues 193–228 form a disordered region; that stretch reads PLLHSPTSNPHSPHSQSHPQSPCWSIEDLRDTLPRV. Basic and acidic residues predominate over residues 219-228; sequence EDLRDTLPRV.

It belongs to the RRM DAZ family. Interacts with the translational regulator orb2. Testis specific.

Its subcellular location is the nucleus. It localises to the cytoplasm. In terms of biological role, RNA-binding protein that plays a central role in spermatogenesis. Required for meiotic entry and germline differentiation, at the transition between G2 and M phases of meiosis I. Acts by regulating translation of specific mRNAs, possibly by binding to their 3'-UTR. Essential for translation of twine (twe) mRNA. Required for the expression of various genes such as CG6784, CG17210, CG15841 scpr-B, scpr-C, and rho-6. The protein is Protein boule (bol) of Drosophila melanogaster (Fruit fly).